We begin with the raw amino-acid sequence, 412 residues long: FAD-dependent monooxygenase nscC (412 aa).

A signal peptide spans 1–21 (MGKQQETILIIGAGIAGLTTS). Residues Glu35 and Ala46 each contribute to the FAD site. Asn92 carries an N-linked (GlcNAc...) asparagine glycan. Position 119 (Arg119) interacts with FAD. 2 N-linked (GlcNAc...) asparagine glycosylation sites follow: Asn170 and Asn231. FAD-binding residues include Asp326 and Gly339.

The protein belongs to the paxM FAD-dependent monooxygenase family. FAD is required as a cofactor.

It participates in secondary metabolite biosynthesis. FAD-dependent monooxygenase; part of the gene cluster that mediates the biosynthesis of neosartoricin B, a prenylated anthracenone that probably exhibits T-cell antiproliferative activity, suggestive of a physiological role as an immunosuppressive agent. The non-reducing polyketide synthase nscA probably synthesizes and cyclizes the decaketide backbone. The hydrolase nscB then mediates the product release through hydrolysis followed by spontaneous decarboxylation. The prenyltransferase nscD catalyzes the addition of the dimethylallyl group to the aromatic C5. The FAD-dependent monooxygenase nscC is then responsible for the stereospecific hydroxylation at C2. Neosartoricin B can be converted into two additional compounds neosartoricins C and D. Neosartoricin C is a spirocyclic compound that is cyclized through the attack of C3 hydroxyl on C14, followed by dehydration. On the other hand, neosartoricin D is a further cyclized compound in which attack of C2 on C14 in neosartoricin C results in the formation of the acetal-containing dioxabicyclo-octanone ring. Both of these compounds are novel and possibly represent related metabolites of the gene cluster. The chain is FAD-dependent monooxygenase nscC from Arthroderma benhamiae (strain ATCC MYA-4681 / CBS 112371) (Trichophyton mentagrophytes).